The following is a 451-amino-acid chain: Probable plasmid replicative DNA helicase (451 aa).

Residues 194-451 (NDSFYDGLPT…SKFSAIKKVW (258 aa)) enclose the SF4 helicase domain. Residue 225–232 (ARPSIGKT) participates in ATP binding.

The protein belongs to the helicase family. DnaB subfamily. Homohexamer.

The enzyme catalyses Couples ATP hydrolysis with the unwinding of duplex DNA at the replication fork by translocating in the 5'-3' direction. This creates two antiparallel DNA single strands (ssDNA). The leading ssDNA polymer is the template for DNA polymerase III holoenzyme which synthesizes a continuous strand.. It catalyses the reaction ATP + H2O = ADP + phosphate + H(+). In terms of biological role, a replicative DNA helicase, it participates in initiation and elongation during DNA replication. Travels ahead of the DNA replisome, separating dsDNA into templates for DNA synthesis. A processive ATP-dependent 5'-3' DNA helicase it has DNA-dependent ATPase activity. The protein is Probable plasmid replicative DNA helicase of Chlamydia muridarum (strain MoPn / Nigg).